Reading from the N-terminus, the 119-residue chain is Large ribosomal subunit protein bL20 (119 aa).

Belongs to the bacterial ribosomal protein bL20 family.

Binds directly to 23S ribosomal RNA and is necessary for the in vitro assembly process of the 50S ribosomal subunit. It is not involved in the protein synthesizing functions of that subunit. This Alkaliphilus metalliredigens (strain QYMF) protein is Large ribosomal subunit protein bL20.